The primary structure comprises 290 residues: Transmembrane protein 33 homolog (290 aa).

Disordered regions lie at residues 1–22 and 39–72; these read MSSP…EFTG and IDPN…SPRA. Residues 45–72 show a composition bias toward low complexity; the sequence is SSNNTTTQRPSTSSSSRTSSSSTSSPRA. The next 4 helical transmembrane spans lie at 83–103, 109–129, 150–170, and 218–238; these read LYGA…FYFI, FFYK…FNTF, FVFY…YLLP, and IVLI…LVFI.

Belongs to the PER33/POM33 family.

The protein localises to the membrane. The protein is Transmembrane protein 33 homolog (tmem33) of Dictyostelium discoideum (Social amoeba).